Consider the following 160-residue polypeptide: Calsequestrin-2 (160 aa).

This sequence belongs to the calsequestrin family. Monomer, homodimer and homooligomer. Mostly monomeric in the absence of calcium. Forms higher oligomers in a calcium-dependent manner. Dimers associate to form tetramers, that then form linear homomer chains. Interacts with ASPH and TRDN. Post-translationally, phosphorylation in the C-terminus, probably by CK2, moderately increases calcium buffering capacity. In terms of processing, N-glycosylated.

Its subcellular location is the sarcoplasmic reticulum lumen. Functionally, calsequestrin is a high-capacity, moderate affinity, calcium-binding protein and thus acts as an internal calcium store in muscle. Calcium ions are bound by clusters of acidic residues at the protein surface, especially at the interface between subunits. Can bind around 60 Ca(2+) ions. Regulates the release of lumenal Ca(2+) via the calcium release channel RYR2; this plays an important role in triggering muscle contraction. Plays a role in excitation-contraction coupling in the heart and in regulating the rate of heart beats. The chain is Calsequestrin-2 (CASQ2) from Sus scrofa (Pig).